The primary structure comprises 303 residues: Glutathione transport system permease protein GsiD (303 aa).

A run of 6 helical transmembrane segments spans residues 40 to 60 (AMTA…ARWI), 105 to 125 (LAAG…LGLL), 144 to 164 (LFAF…GSGI), 165 to 185 (ANVI…LVRG), 222 to 242 (IVVF…SLSF), and 266 to 286 (VIAP…VLAF). One can recognise an ABC transmembrane type-1 domain in the interval 101-290 (AQISLAAGVF…LTVLAFNLLG (190 aa)).

It belongs to the binding-protein-dependent transport system permease family. As to quaternary structure, the complex is composed of two ATP-binding proteins (GsiA), two transmembrane proteins (GsiC and GsiD) and a solute-binding protein (GsiB).

The protein resides in the cell inner membrane. In terms of biological role, part of the ABC transporter complex GsiABCD involved in glutathione import. Probably responsible for the translocation of the substrate across the membrane. This is Glutathione transport system permease protein GsiD from Escherichia coli O1:K1 / APEC.